The primary structure comprises 274 residues: Putative bidirectional sugar transporter SWEET7d (274 aa).

At 1–8 the chain is on the extracellular side; sequence MVPDLIRN. A helical transmembrane segment spans residues 9 to 29; it reads VVGIVGNVISFGLFLSPVPTF. The MtN3/slv 1 domain occupies 9-96; the sequence is VVGIVGNVIS…TIFFLFSDKK (88 aa). Topologically, residues 30–45 are cytoplasmic; that stretch reads WRIIKNKDVRDFKADQ. Residues 46 to 66 form a helical membrane-spanning segment; sequence YLATLLNCMLWVFYGLPIVHP. Over 67 to 68 the chain is Extracellular; that stretch reads NS. Residues 69 to 89 traverse the membrane as a helical segment; that stretch reads ILVVTINGIGLVIEAVYLTIF. At 90 to 100 the chain is on the cytoplasmic side; that stretch reads FLFSDKKNKKK. The helical transmembrane segment at 101-121 threads the bilayer; that stretch reads MGVVLATEALFMAAVALGVLL. At 122 to 130 the chain is on the extracellular side; the sequence is DAHTHQRRS. The helical transmembrane segment at 131-151 threads the bilayer; it reads LIVGILCVIFGTIMYSSPLTI. The region spanning 132-214 is the MtN3/slv 2 domain; sequence IVGILCVIFG…QLILYAIYYR (83 aa). Topologically, residues 152 to 164 are cytoplasmic; the sequence is MSQVVKTKSVEYM. The chain crosses the membrane as a helical span at residues 165-185; it reads PLLLSVVSFLNGLCWTSYALI. Over 186-188 the chain is Extracellular; the sequence is RFD. Residues 189–209 form a helical membrane-spanning segment; sequence IFITIPNGLGVLFALMQLILY. The Cytoplasmic portion of the chain corresponds to 210–274; sequence AIYYRTTPKK…SISRLSHKLA (65 aa). The disordered stretch occupies residues 218 to 274; it reads KKPSTTGPHPRSRIRTSSYQPSPPSPRAPASSPLSARTTTSMAAMSPSISRLSHKLA. Over residues 245-258 the composition is skewed to low complexity; it reads APASSPLSARTTTS.

This sequence belongs to the SWEET sugar transporter family. In terms of assembly, forms homooligomers and/or heterooligomers.

Its subcellular location is the cell membrane. Its function is as follows. Mediates both low-affinity uptake and efflux of sugar across the plasma membrane. This chain is Putative bidirectional sugar transporter SWEET7d (SWEET7D), found in Oryza sativa subsp. japonica (Rice).